Reading from the N-terminus, the 122-residue chain is Large ribosomal subunit protein uL14 (122 aa).

It belongs to the universal ribosomal protein uL14 family. As to quaternary structure, part of the 50S ribosomal subunit. Forms a cluster with proteins L3 and L19. In the 70S ribosome, L14 and L19 interact and together make contacts with the 16S rRNA in bridges B5 and B8.

In terms of biological role, binds to 23S rRNA. Forms part of two intersubunit bridges in the 70S ribosome. In Shouchella clausii (strain KSM-K16) (Alkalihalobacillus clausii), this protein is Large ribosomal subunit protein uL14.